The following is a 354-amino-acid chain: Serum paraoxonase/arylesterase 2 (354 aa).

Cys-42 and Cys-352 are joined by a disulfide. Residues Glu-53 and Asp-54 each contribute to the Ca(2+) site. Residue His-114 is the Proton acceptor of the active site. Positions 116, 167, 168, and 223 each coordinate Ca(2+). An N-linked (GlcNAc...) asparagine glycan is attached at Asn-254. Ca(2+) contacts are provided by Asp-268 and Asn-269. N-linked (GlcNAc...) asparagine glycans are attached at residues Asn-269 and Asn-323.

This sequence belongs to the paraoxonase family. Homotrimer. It depends on Ca(2+) as a cofactor. In terms of processing, glycosylated. Post-translationally, the signal sequence is not cleaved.

The protein resides in the membrane. The enzyme catalyses a phenyl acetate + H2O = a phenol + acetate + H(+). The catalysed reaction is an N-acyl-L-homoserine lactone + H2O = an N-acyl-L-homoserine + H(+). Its function is as follows. Capable of hydrolyzing lactones and a number of aromatic carboxylic acid esters. This is Serum paraoxonase/arylesterase 2 (Pon2) from Rattus norvegicus (Rat).